Here is a 1235-residue protein sequence, read N- to C-terminus: High-affinity potassium transport protein (1235 aa).

The residue at position 15 (S15) is a Phosphoserine. A run of 2 helical transmembrane segments spans residues 49–70 (SFIA…ILLY) and 78–98 (IDTL…TVDI). N-linked (GlcNAc...) asparagine glycosylation occurs at N100. The helical transmembrane segment at 107 to 127 (IVLYIVCCISTPIAVHSCLAF) threads the bilayer. Disordered regions lie at residues 161 to 310 (LTAR…SPAD), 323 to 344 (EATA…GTRY), 361 to 441 (KIKI…TKPP), and 488 to 565 (RLST…HQLQ). Residues 164–179 (RTMTKNRTGTQRTSYP) show a composition bias toward polar residues. A glycan (N-linked (GlcNAc...) asparagine) is linked at N169. Basic and acidic residues predominate over residues 198 to 217 (VNRDEQDSVHSDQNSHDISR). The segment covering 219-232 (SSNNNTNHNGSSGS) has biased composition (low complexity). N222 and N227 each carry an N-linked (GlcNAc...) asparagine glycan. Residues 237–247 (VKEDETDDNGE) are compositionally biased toward acidic residues. Over residues 248 to 274 (YQENNSYSTVGSSSNTVADESLNQKPK) the composition is skewed to polar residues. Residue N251 is glycosylated (N-linked (GlcNAc...) asparagine). N-linked (GlcNAc...) asparagine glycosylation is found at N369 and N383. 2 stretches are compositionally biased toward polar residues: residues 370 to 415 (ESNT…SNSG) and 490 to 502 (STGS…SNNV). Residue S414 is modified to Phosphoserine. N-linked (GlcNAc...) asparagine glycans are attached at residues N497, N501, and N532. The span at 510–539 (DMDDDDDDDDNDGDNNEEYFADNESGDEDE) shows a compositional bias: acidic residues. Phosphoserine is present on S534. Over residues 540 to 563 (RVQQSEPHSDSELKSHQQQQEKHQ) the composition is skewed to basic and acidic residues. 2 N-linked (GlcNAc...) asparagine glycosylation sites follow: N580 and N677. A disordered region spans residues 671-706 (HDGSHKNGSEEASSDSNENIYSTNGGSDHNGLNNYP). The segment covering 680–706 (EEASSDSNENIYSTNGGSDHNGLNNYP) has biased composition (polar residues). 5 helical membrane-spanning segments follow: residues 778–800 (ILVV…WIIL), 813–834 (VSPT…GLTL), 838–858 (SMMS…FIII), 862–882 (GFPI…PDLS), and 898–918 (CFTL…LAGL). N919 is a glycosylation site (N-linked (GlcNAc...) asparagine). 2 helical membrane-spanning segments follow: residues 923-943 (WILF…SKGY) and 971-991 (SIQV…AISI). The segment at 1003-1063 (GLYGDMGGEP…KKKKKTENPN (61 aa)) is disordered. Over residues 1010 to 1031 (GEPEDTDTEDDGNDEDDDEENE) the composition is skewed to acidic residues. N1030 is a glycosylation site (N-linked (GlcNAc...) asparagine). Over residues 1036–1049 (QSSQRSSSNNNNNN) the composition is skewed to low complexity. 2 consecutive transmembrane segments (helical) span residues 1078–1098 (QLSF…ICEG) and 1111–1131 (IFAI…SLGY). An N-linked (GlcNAc...) asparagine glycan is attached at N1135.

This sequence belongs to the TrkH potassium transport family.

The protein resides in the membrane. This protein is required for high-affinity potassium transport. The protein is High-affinity potassium transport protein (TRK1) of Saccharomyces cerevisiae (strain ATCC 204508 / S288c) (Baker's yeast).